Here is a 264-residue protein sequence, read N- to C-terminus: Sororin (264 aa).

A disordered region spans residues 1-45; that stretch reads MAERRTRSGGAAQRSGPRTSLTKPSKSSKRKSGSDLPNSFSEIWP. Ser20, Ser32, Ser34, Ser78, and Ser82 each carry phosphoserine. The KEN box motif lies at 87-89; the sequence is KEN. Thr97 is modified (phosphothreonine). Position 106 is a phosphoserine (Ser106). A phosphothreonine mark is found at Thr110, Thr114, and Thr159. The short motif at 166-168 is the FGF motif element; sequence FGF. Ser222 is subject to Phosphoserine. The tract at residues 242-264 is C-terminal Sororin domain; that stretch reads LDKWAVAMNAEFEAAEQFELLIE.

It belongs to the sororin family. In terms of assembly, interacts with the APC/C complex. Interacts with the chromatin-bound cohesin complex; the interaction is indirect, occurs after DNA replication and requires acetylation of the cohesin component SMC3. Interacts (via the FGF motif) with PDS5A and PDS5B; the interaction is direct and prevents the interaction of PDS5A with WAPL. In terms of processing, phosphorylated. Phosphorylation, as cells enter mitosis, disrupts the interaction with PDS5A and relieves the inhibition of WAPL by CDCA5. Post-translationally, ubiquitinated by the APC/C complex in G1, leading to its degradation.

Its subcellular location is the nucleus. The protein resides in the chromosome. It is found in the cytoplasm. Functionally, regulator of sister chromatid cohesion in mitosis stabilizing cohesin complex association with chromatin. May antagonize the action of WAPL which stimulates cohesin dissociation from chromatin. Cohesion ensures that chromosome partitioning is accurate in both meiotic and mitotic cells and plays an important role in DNA repair. Required for efficient DNA double-stranded break repair. This is Sororin (Cdca5) from Mus musculus (Mouse).